A 545-amino-acid polypeptide reads, in one-letter code: Chaperonin GroEL (545 aa).

ATP-binding positions include 30 to 33 (TLGP), Lys-51, 87 to 91 (DGTTT), Gly-415, and Asp-496.

Belongs to the chaperonin (HSP60) family. In terms of assembly, forms a cylinder of 14 subunits composed of two heptameric rings stacked back-to-back. Interacts with the co-chaperonin GroES.

It localises to the cytoplasm. It catalyses the reaction ATP + H2O + a folded polypeptide = ADP + phosphate + an unfolded polypeptide.. Its function is as follows. Together with its co-chaperonin GroES, plays an essential role in assisting protein folding. The GroEL-GroES system forms a nano-cage that allows encapsulation of the non-native substrate proteins and provides a physical environment optimized to promote and accelerate protein folding. This Chlorobaculum tepidum (strain ATCC 49652 / DSM 12025 / NBRC 103806 / TLS) (Chlorobium tepidum) protein is Chaperonin GroEL.